A 681-amino-acid polypeptide reads, in one-letter code: Transferrin (681 aa).

The first 18 residues, 1 to 18, serve as a signal peptide directing secretion; sequence MALKLLTLIALTCAAANA. Transferrin-like domains are found at residues 23 to 364 and 371 to 676; these read YKLC…ERGH and VRLC…DVIS. Cystine bridges form between cysteine 26–cysteine 60 and cysteine 35–cysteine 51. 2 residues coordinate Fe(3+): aspartate 75 and tyrosine 108. 4 disulfide bridges follow: cysteine 132–cysteine 228, cysteine 181–cysteine 207, cysteine 204–cysteine 213, and cysteine 271–cysteine 284. The hydrogencarbonate site is built by threonine 134, arginine 138, valine 140, and glycine 141. Asparagine 218 is a glycosylation site (N-linked (GlcNAc...) asparagine). Tyrosine 222 is a Fe(3+) binding site. N-linked (GlcNAc...) asparagine glycosylation occurs at asparagine 355. 2 cysteine pairs are disulfide-bonded: cysteine 374/cysteine 411 and cysteine 384/cysteine 402. N-linked (GlcNAc...) asparagine glycosylation occurs at asparagine 418. 3 disulfides stabilise this stretch: cysteine 478-cysteine 551, cysteine 506-cysteine 678, and cysteine 579-cysteine 596.

This sequence belongs to the transferrin family.

The protein localises to the secreted. Transferrins are iron binding transport proteins which bind Fe(3+) ion in association with the binding of an anion, usually bicarbonate. This transferrin binds only one Fe(3+) ion per protein molecule. This chain is Transferrin, found in Manduca sexta (Tobacco hawkmoth).